The following is a 958-amino-acid chain: Glycine dehydrogenase (decarboxylating) (958 aa).

Position 705 is an N6-(pyridoxal phosphate)lysine (K705).

Belongs to the GcvP family. The glycine cleavage system is composed of four proteins: P, T, L and H. Requires pyridoxal 5'-phosphate as cofactor.

The catalysed reaction is N(6)-[(R)-lipoyl]-L-lysyl-[glycine-cleavage complex H protein] + glycine + H(+) = N(6)-[(R)-S(8)-aminomethyldihydrolipoyl]-L-lysyl-[glycine-cleavage complex H protein] + CO2. Functionally, the glycine cleavage system catalyzes the degradation of glycine. The P protein binds the alpha-amino group of glycine through its pyridoxal phosphate cofactor; CO(2) is released and the remaining methylamine moiety is then transferred to the lipoamide cofactor of the H protein. This is Glycine dehydrogenase (decarboxylating) from Synechococcus sp. (strain CC9902).